A 189-amino-acid polypeptide reads, in one-letter code: Cancer/testis antigen family 45 member A2 (189 aa).

This sequence belongs to the CT45 family. Testis specific. Expressed in cancer cell lines.

This is Cancer/testis antigen family 45 member A2 from Homo sapiens (Human).